We begin with the raw amino-acid sequence, 131 residues long: Peptidyl-prolyl cis-trans isomerase NIMA-interacting 4 (131 aa).

Residues 1–25 (MPPKGKSGSGKGGKGGAASGSDSAD) form a necessary for nuclear localization and DNA-binding region. The tract at residues 1 to 39 (MPPKGKSGSGKGGKGGAASGSDSADKKSQGPKGGGNAVK) is disordered. The segment at 1-41 (MPPKGKSGSGKGGKGGAASGSDSADKKSQGPKGGGNAVKVR) is necessary for association with the pre-rRNP complexes. The span at 7–18 (SGSGKGGKGGAA) shows a compositional bias: gly residues. Ser-19 is modified (phosphoserine; by CK2). The region spanning 35 to 129 (GNAVKVRHIL…FGYHIIMVEG (95 aa)) is the PpiC domain.

Belongs to the PpiC/parvulin rotamase family. PIN4 subfamily. As to quaternary structure, found in pre-ribosomal ribonucleoprotein (pre-rRNP) complexes. Phosphorylated. Phosphorylation occurs both in the nucleus and the cytoplasm. Phosphorylation at Ser-19 does not affect its PPIase activity but is required for nuclear localization, and the dephosphorylation is a prerequisite for the binding to DNA. The unphosphorylated form associates with the pre-rRNP complexes in the nucleus.

The protein resides in the nucleus. The protein localises to the nucleolus. Its subcellular location is the cytoplasm. It is found in the cytoskeleton. It localises to the spindle. It catalyses the reaction [protein]-peptidylproline (omega=180) = [protein]-peptidylproline (omega=0). Involved as a ribosomal RNA processing factor in ribosome biogenesis. Binds to tightly bent AT-rich stretches of double-stranded DNA. In Mus musculus (Mouse), this protein is Peptidyl-prolyl cis-trans isomerase NIMA-interacting 4 (Pin4).